We begin with the raw amino-acid sequence, 319 residues long: MAQRDYVRRSQPAPSRRKKSTSRKKQRNLPAVSPAMVAIAAAVLVTFIGGLYFITHHKKEESETLQSQKVTGNGLPPKPEERWRYIKELESRQPGVRAPTEPSAGGEVKTPEQLTPEQRQLLEQMQADMRQQPTQLVEVPWNEQTPEQRQQTLQRQRQAQQLAEQQRLAQQSRTTEQSWQQQTRTSQAAPVQAQPRQSKPASSQQPYQDLLQTPAHTTAQSKPQQAAPVARAADAPKPTAEKKDERRWMVQCGSFRGAEQAETVRAQLAFEGFDSKITTNNGWNRVVIGPVKGKENADSTLNRLKMAGHTNCIRLAAGG.

Positions 1–30 (MAQRDYVRRSQPAPSRRKKSTSRKKQRNLP) are disordered. Residues 1–33 (MAQRDYVRRSQPAPSRRKKSTSRKKQRNLPAVS) are Cytoplasmic-facing. Residues 4 to 6 (RDY) form a mediates interaction with FtsA region. Basic residues predominate over residues 15 to 27 (SRRKKSTSRKKQR). Residues 34 to 54 (PAMVAIAAAVLVTFIGGLYFI) form a helical membrane-spanning segment. Over 55–319 (THHKKEESET…TNCIRLAAGG (265 aa)) the chain is Periplasmic. Disordered stretches follow at residues 60-79 (EESE…PPKP) and 89-113 (LESR…TPEQ). 4 tandem repeats follow at residues 115–120 (TPEQRQ), 145–150 (TPEQRQ), 197–200 (QSKP), and 220–223 (QSKP). Residues 115 to 150 (TPEQRQLLEQMQADMRQQPTQLVEVPWNEQTPEQRQ) are 2 X 6 AA repeats. Residues 140–245 (PWNEQTPEQR…PKPTAEKKDE (106 aa)) are disordered. Low complexity predominate over residues 143 to 171 (EQTPEQRQQTLQRQRQAQQLAEQQRLAQQ). Positions 172 to 221 (SRTTEQSWQQQTRTSQAAPVQAQPRQSKPASSQQPYQDLLQTPAHTTAQS) are enriched in polar residues. Positions 197–223 (QSKPASSQQPYQDLLQTPAHTTAQSKP) are 2 X 4 AA repeats. Positions 222-238 (KPQQAAPVARAADAPKP) are enriched in low complexity. An SPOR domain is found at 242 to 316 (KKDERRWMVQ…AGHTNCIRLA (75 aa)). Cys252 and Cys312 form a disulfide bridge.

It belongs to the FtsN family. In terms of assembly, interacts with FtsA via its N-terminal cytoplasmic domain. Interacts with ZapA, FtsQ, FtsW and FtsI.

The protein localises to the cell inner membrane. In terms of biological role, essential cell division protein that activates septal peptidoglycan synthesis and constriction of the cell. Acts on both sides of the membrane, via interaction with FtsA in the cytoplasm and interaction with the FtsQBL complex in the periplasm. These interactions may induce a conformational switch in both FtsA and FtsQBL, leading to septal peptidoglycan synthesis by FtsI and associated synthases. Required for full FtsI activity. Required for recruitment of AmiC to the septal ring. This chain is Cell division protein FtsN, found in Escherichia coli (strain K12).